Here is a 583-residue protein sequence, read N- to C-terminus: uncharacterized protein (583 aa).

Residue 24 to 140 participates in a nucleoside 3',5'-cyclic phosphate binding; sequence ILADIDDEQL…SAMLRAMARM (117 aa). Residues 309–469 form the PNPLA domain; that stretch reads LVMAGGGARG…LNNLPANVMC (161 aa). Positions 313–318 match the GXGXXG motif; that stretch reads GGGARG. A GXSXG motif is present at residues 340–344; it reads GTSSG. Serine 342 functions as the Nucleophile in the catalytic mechanism. Residue aspartate 456 is the Proton acceptor of the active site. The DGA/G motif lies at 456–458; that stretch reads DGG.

The protein belongs to the NTE family.

This is an uncharacterized protein from Mycobacterium bovis (strain ATCC BAA-935 / AF2122/97).